We begin with the raw amino-acid sequence, 243 residues long: Cell division protein ZipA (243 aa).

Topologically, residues 1 to 4 (MSDM) are periplasmic. The chain crosses the membrane as a helical span at residues 5–25 (AMIRIGILIAGLLLVAAIFLF). Residues 26–243 (GRPKKSPQGR…APPLTKSPRW (218 aa)) lie on the Cytoplasmic side of the membrane. The disordered stretch occupies residues 30-89 (KSPQGRRVDKGEGQPRERREPVISSEFGAEGDAAERAEGVEQSELNLEGQDASGGNEVGK). Basic and acidic residues predominate over residues 35-50 (RRVDKGEGQPRERREP).

Belongs to the ZipA family. In terms of assembly, interacts with FtsZ via their C-terminal domains.

Its subcellular location is the cell inner membrane. Essential cell division protein that stabilizes the FtsZ protofilaments by cross-linking them and that serves as a cytoplasmic membrane anchor for the Z ring. Also required for the recruitment to the septal ring of downstream cell division proteins. The sequence is that of Cell division protein ZipA from Xanthomonas axonopodis pv. citri (strain 306).